Here is a 323-residue protein sequence, read N- to C-terminus: Fructokinase-1 (323 aa).

Belongs to the carbohydrate kinase PfkB family. As to expression, expressed in root, endosperm and leaf tissues.

The enzyme catalyses D-fructose + ATP = D-fructose 6-phosphate + ADP + H(+). It participates in glycan biosynthesis; starch biosynthesis. Its activity is regulated as follows. Completely inhibited at 50 mM ATP, but not inhibited at high fructose concentration. Functionally, fructokinase that may play an important role in maintaining the flux of carbon towards starch formation. May also be involved in a sugar-sensing pathway. In Oryza sativa subsp. japonica (Rice), this protein is Fructokinase-1.